A 628-amino-acid chain; its full sequence is Chaperone protein DnaK (628 aa).

The residue at position 174 (T174) is a Phosphothreonine; by autocatalysis. The disordered stretch occupies residues 589–628 (AAGGAGPDMGAGAGPDMGAGASNGSAPYGDDVVDGDYKEV). A compositionally biased stretch (gly residues) spans 591-605 (GGAGPDMGAGAGPDM).

Belongs to the heat shock protein 70 family.

Its function is as follows. Acts as a chaperone. This chain is Chaperone protein DnaK, found in Lachnospira eligens (strain ATCC 27750 / DSM 3376 / VPI C15-48 / C15-B4) (Eubacterium eligens).